The sequence spans 504 residues: MNKFDEFIESNEKDLDVDTSTRNSIISMSPVRKTGRKIRSASSNGYRLEHHRTSSAGSMHSQRLMTPTRLNDQDHPLQAKPDARRVVTRHSSVSVPNAMSKRRSLIQPMVVPTTPESQNNLPSVSHSEGSYGIPLESTTVLSSEQAMASGLRRSRNGSSQSVNSMIATTIPTNGVDVSALLQSLATKELELLECKQKIEDLKKQTQHEEQNYTRRARELHELKEQVSKHLDPSLNTPVKNRAFSPVYQNIPLESRTENAGNSSLPSSVSKPKNMGHQSTNQSRSVSPQDIQERRQRDDSSDSSKQSLWSKPLALFNQFDKIIQHEIERTLNWDDSLSGTPEVQEGTPTSNSESSAQQYDNEAPGARQKSPSQGSVSRSLWSFVSDVKAGLLGIEEENDNDVITDNRCDPVYKSDRQHEQKKSTHKITNRGQAEDSGDDSSLNMRKFKTTTKFQKDNAGNNSLTDESGHRTREKKSKRSSNKLSFIGEPDNDNSSVKNSVEMTDF.

The disordered stretch occupies residues 32–62 (RKTGRKIRSASSNGYRLEHHRTSSAGSMHSQ). Positions 179–231 (ALLQSLATKELELLECKQKIEDLKKQTQHEEQNYTRRARELHELKEQVSKHLD) form a coiled coil. Thr-236 bears the Phosphothreonine mark. Phosphoserine occurs at positions 244 and 286. Disordered regions lie at residues 252-306 (LESR…SKQS), 332-377 (WDDS…SVSR), and 400-504 (DVIT…MTDF). Residues 257–287 (ENAGNSSLPSSVSKPKNMGHQSTNQSRSVSP) show a composition bias toward polar residues. Over residues 290–301 (IQERRQRDDSSD) the composition is skewed to basic and acidic residues. 2 stretches are compositionally biased toward polar residues: residues 332–359 (WDDSLSGTPEVQEGTPTSNSESSAQQYD) and 368–377 (KSPSQGSVSR). A compositionally biased stretch (basic and acidic residues) spans 403 to 421 (TDNRCDPVYKSDRQHEQKK). Residues 470–479 (TREKKSKRSS) are compositionally biased toward basic residues. Polar residues predominate over residues 491–504 (DNSSVKNSVEMTDF).

Belongs to the TDA11 family.

Its subcellular location is the cytoplasm. In Saccharomyces cerevisiae (strain ATCC 204508 / S288c) (Baker's yeast), this protein is Topoisomerase I damage affected protein 11 (TDA11).